We begin with the raw amino-acid sequence, 512 residues long: Protein arginine N-methyltransferase 2 (512 aa).

A disordered region spans residues 67 to 103 (TSNIDDLPLPPPIQEVEEEEPTQQNIEQQQQTQDESD). Positions 88–99 (TQQNIEQQQQTQ) are enriched in low complexity. Positions 120 to 508 (DEEYFSSYSK…KTNPFDYSYQ (389 aa)) constitute an SAM-dependent MTase PRMT-type domain. His133, Arg142, Gly166, and Glu217 together coordinate S-adenosyl-L-methionine. Active-site residues include Glu231 and Glu240. A disordered region spans residues 375 to 395 (DDDDNDNNNNNNDNSNDDENK).

This sequence belongs to the class I-like SAM-binding methyltransferase superfamily. Protein arginine N-methyltransferase family.

Its subcellular location is the cytoplasm. The protein resides in the nucleus. The catalysed reaction is L-arginyl-[protein] + 2 S-adenosyl-L-methionine = N(omega),N(omega)-dimethyl-L-arginyl-[protein] + 2 S-adenosyl-L-homocysteine + 2 H(+). Arginine methyltransferase that methylates the guanidino nitrogens of arginyl residues in some proteins such as histones. This Dictyostelium discoideum (Social amoeba) protein is Protein arginine N-methyltransferase 2 (prmt2).